The primary structure comprises 93 residues: Pyrimidine/purine nucleoside phosphorylase (93 aa).

This sequence belongs to the nucleoside phosphorylase PpnP family.

The enzyme catalyses a purine D-ribonucleoside + phosphate = a purine nucleobase + alpha-D-ribose 1-phosphate. It catalyses the reaction adenosine + phosphate = alpha-D-ribose 1-phosphate + adenine. The catalysed reaction is cytidine + phosphate = cytosine + alpha-D-ribose 1-phosphate. It carries out the reaction guanosine + phosphate = alpha-D-ribose 1-phosphate + guanine. The enzyme catalyses inosine + phosphate = alpha-D-ribose 1-phosphate + hypoxanthine. It catalyses the reaction thymidine + phosphate = 2-deoxy-alpha-D-ribose 1-phosphate + thymine. The catalysed reaction is uridine + phosphate = alpha-D-ribose 1-phosphate + uracil. It carries out the reaction xanthosine + phosphate = alpha-D-ribose 1-phosphate + xanthine. Functionally, catalyzes the phosphorolysis of diverse nucleosides, yielding D-ribose 1-phosphate and the respective free bases. Can use uridine, adenosine, guanosine, cytidine, thymidine, inosine and xanthosine as substrates. Also catalyzes the reverse reactions. This Shewanella halifaxensis (strain HAW-EB4) protein is Pyrimidine/purine nucleoside phosphorylase.